We begin with the raw amino-acid sequence, 521 residues long: Phosphoethanolamine transferase EptA (521 aa).

6 consecutive transmembrane segments (helical) span residues 18-38 (AGLLYSLIFGVLYHFPLFVYV), 47-67 (FIAMMVVVLFCVNGALFLALG), 79-99 (IVFSLLNSVAFYFISAYKVFL), 118-138 (FLSVKLFVFIVVFGVLPGYVI), 150-170 (APFLAILALVFIFIASALANT), and 182-202 (FIGGLILPFAYSVNAFRVSAL).

Belongs to the phosphoethanolamine transferase family. EptA subfamily.

The protein localises to the cell inner membrane. Its pathway is bacterial outer membrane biogenesis; LPS lipid A biosynthesis. Functionally, probably catalyzes the addition of a phosphoethanolamine moiety to the dephosphorylated 1-position of the disaccharide backbone of lipid A. Lipid A that is 1-phosphorylated is not a substrate for this enzyme. The sequence is that of Phosphoethanolamine transferase EptA from Helicobacter pylori (strain ATCC 700392 / 26695) (Campylobacter pylori).